Consider the following 301-residue polypeptide: Large ribosomal subunit protein uL18 (301 aa).

Residues 257–271 (NPERVKSTKKNDKPK) show a composition bias toward basic and acidic residues. Residues 257-283 (NPERVKSTKKNDKPKRDHKKFYPTKLT) form a disordered region.

This sequence belongs to the universal ribosomal protein uL18 family. As to quaternary structure, component of the large ribosomal subunit (LSU).

The protein localises to the cytoplasm. The protein resides in the nucleus. Component of the ribosome, a large ribonucleoprotein complex responsible for the synthesis of proteins in the cell. The small ribosomal subunit (SSU) binds messenger RNAs (mRNAs) and translates the encoded message by selecting cognate aminoacyl-transfer RNA (tRNA) molecules. The large subunit (LSU) contains the ribosomal catalytic site termed the peptidyl transferase center (PTC), which catalyzes the formation of peptide bonds, thereby polymerizing the amino acids delivered by tRNAs into a polypeptide chain. The nascent polypeptides leave the ribosome through a tunnel in the LSU and interact with protein factors that function in enzymatic processing, targeting, and the membrane insertion of nascent chains at the exit of the ribosomal tunnel. In Tetrahymena thermophila (strain SB210), this protein is Large ribosomal subunit protein uL18 (RPL5).